The sequence spans 301 residues: Probable alpha-L-glutamate ligase (301 aa).

In terms of domain architecture, ATP-grasp spans 104–287; it reads LQLLSRRGIG…VAGIIIEHLE (184 aa). Residues Lys141, 178–179, Asp187, and 211–213 contribute to the ATP site; these read EY and RSN. Residues Asp248, Glu260, and Asn262 each coordinate Mg(2+). The Mn(2+) site is built by Asp248, Glu260, and Asn262.

Belongs to the RimK family. Requires Mg(2+) as cofactor. The cofactor is Mn(2+).

This chain is Probable alpha-L-glutamate ligase, found in Pseudomonas fluorescens (strain Pf0-1).